The following is a 253-amino-acid chain: Ubiquinone/menaquinone biosynthesis C-methyltransferase UbiE (253 aa).

S-adenosyl-L-methionine is bound by residues Thr-76, Asp-97, and 125–126; that span reads NA.

The protein belongs to the class I-like SAM-binding methyltransferase superfamily. MenG/UbiE family.

It catalyses the reaction a 2-demethylmenaquinol + S-adenosyl-L-methionine = a menaquinol + S-adenosyl-L-homocysteine + H(+). The enzyme catalyses a 2-methoxy-6-(all-trans-polyprenyl)benzene-1,4-diol + S-adenosyl-L-methionine = a 5-methoxy-2-methyl-3-(all-trans-polyprenyl)benzene-1,4-diol + S-adenosyl-L-homocysteine + H(+). It functions in the pathway quinol/quinone metabolism; menaquinone biosynthesis; menaquinol from 1,4-dihydroxy-2-naphthoate: step 2/2. It participates in cofactor biosynthesis; ubiquinone biosynthesis. In terms of biological role, methyltransferase required for the conversion of demethylmenaquinol (DMKH2) to menaquinol (MKH2) and the conversion of 2-polyprenyl-6-methoxy-1,4-benzoquinol (DDMQH2) to 2-polyprenyl-3-methyl-6-methoxy-1,4-benzoquinol (DMQH2). The sequence is that of Ubiquinone/menaquinone biosynthesis C-methyltransferase UbiE from Stenotrophomonas maltophilia (strain K279a).